Here is a 410-residue protein sequence, read N- to C-terminus: Phosphoglycerate kinase (410 aa).

Residues 19 to 21 (DLN), R34, 57 to 60 (HQGK), R114, and R154 each bind substrate. Residues E332 and 358-361 (GGHS) each bind ATP.

The protein belongs to the phosphoglycerate kinase family. In terms of assembly, homodimer.

It is found in the cytoplasm. It catalyses the reaction (2R)-3-phosphoglycerate + ATP = (2R)-3-phospho-glyceroyl phosphate + ADP. It functions in the pathway carbohydrate degradation; glycolysis; pyruvate from D-glyceraldehyde 3-phosphate: step 2/5. The chain is Phosphoglycerate kinase (pgk) from Pyrococcus abyssi (strain GE5 / Orsay).